Reading from the N-terminus, the 326-residue chain is Adenosine receptor A1 (326 aa).

Residues 1 to 10 (MPPYISAFQA) lie on the Extracellular side of the membrane. Residues 11–33 (AYIGIEVLIALVSVPGNVLVIWA) form a helical membrane-spanning segment. The Cytoplasmic portion of the chain corresponds to 34 to 46 (VKVNQALRDATFC). A helical membrane pass occupies residues 47–69 (FIVSLAVADVAVGALVIPLAILI). Residues 70 to 80 (NIGPQTYFHTC) are Extracellular-facing. A disulfide bond links C80 and C169. A helical transmembrane segment spans residues 81–102 (LMVACPVLILTQSSILALLAIA). Residues 103-123 (VDRYLRVKIPLRYKTVVTQRR) are Cytoplasmic-facing. Residues 124 to 146 (AAVAIAGCWILSLVVGLTPMFGW) form a helical membrane-spanning segment. The Extracellular segment spans residues 147–176 (NNLSEVEQAWIANGSVGEPVIKCEFEKVIS). 2 N-linked (GlcNAc...) asparagine glycosylation sites follow: N148 and N159. A helical transmembrane segment spans residues 177–201 (MEYMVYFNFFVWVLPPLLLMVLIYL). Topologically, residues 202-235 (EVFYLIRKQLNKKVSASSGDPQKYYGKELKIAKS) are cytoplasmic. Residues 236 to 259 (LALILFLFALSWLPLHILNCITLF) form a helical membrane-spanning segment. Residues 260-267 (CPTCQKPS) are Extracellular-facing. A helical transmembrane segment spans residues 268–292 (ILIYIAIFLTHGNSAMNPIVYAFRI). The Cytoplasmic segment spans residues 293–326 (HKFRVTFLKIWNDHFRCQPKPPIEEDIPEEKADD). Residue C309 is the site of S-palmitoyl cysteine attachment.

This sequence belongs to the G-protein coupled receptor 1 family.

It is found in the cell membrane. Receptor for adenosine. The activity of this receptor is mediated by G proteins which inhibit adenylyl cyclase. The protein is Adenosine receptor A1 (Adora1) of Mus musculus (Mouse).